A 189-amino-acid polypeptide reads, in one-letter code: UPF0301 protein PputGB1_5045 (189 aa).

Belongs to the UPF0301 (AlgH) family.

This Pseudomonas putida (strain GB-1) protein is UPF0301 protein PputGB1_5045.